A 552-amino-acid chain; its full sequence is HTH-type transcriptional regulator SgrR (552 aa).

The HTH marR-type domain occupies 1–116; sequence MPSGRLQQQF…LISHLGRSFR (116 aa). Positions 26–49 form a DNA-binding region, H-T-H motif; the sequence is LNELADLLNCSRRHMRTLLNTMQA. Residues 163–493 form a solute-binding region; the sequence is ELEADIAHHW…RDWQDDAAQW (331 aa).

Functionally, activates the small RNA gene sgrS under glucose-phosphate stress conditions as well as yfdZ. Represses its own transcription under both stress and non-stress conditions. Might act as a sensor of the intracellular accumulation of phosphoglucose by binding these molecules in its C-terminal solute-binding domain. This is HTH-type transcriptional regulator SgrR from Salmonella choleraesuis (strain SC-B67).